A 121-amino-acid chain; its full sequence is Large ribosomal subunit protein bL12 (121 aa).

It belongs to the bacterial ribosomal protein bL12 family. In terms of assembly, homodimer. Part of the ribosomal stalk of the 50S ribosomal subunit. Forms a multimeric L10(L12)X complex, where L10 forms an elongated spine to which 2 to 4 L12 dimers bind in a sequential fashion. Binds GTP-bound translation factors.

Forms part of the ribosomal stalk which helps the ribosome interact with GTP-bound translation factors. Is thus essential for accurate translation. This Clostridium perfringens (strain 13 / Type A) protein is Large ribosomal subunit protein bL12.